A 619-amino-acid polypeptide reads, in one-letter code: tRNA (guanine(37)-N(1))-methyltransferase 2 (619 aa).

Residues 1 to 10 (MVSKLSLFRA) constitute a mitochondrion transit peptide. S-adenosyl-L-methionine contacts are provided by residues arginine 434, 472–473 (DL), 500–501 (DG), and asparagine 523.

It belongs to the class I-like SAM-binding methyltransferase superfamily. TRM5/TYW2 family. As to quaternary structure, monomer.

The protein localises to the mitochondrion matrix. The protein resides in the nucleus. It localises to the cytoplasm. The enzyme catalyses guanosine(37) in tRNA + S-adenosyl-L-methionine = N(1)-methylguanosine(37) in tRNA + S-adenosyl-L-homocysteine + H(+). Its function is as follows. Specifically methylates the N1 position of guanosine-37 in various cytoplasmic and mitochondrial tRNAs. Methylation is not dependent on the nature of the nucleoside 5' of the target nucleoside. This is the first step in the biosynthesis of wybutosine (yW), a modified base adjacent to the anticodon of tRNAs and required for accurate decoding. The polypeptide is tRNA (guanine(37)-N(1))-methyltransferase 2 (Arabidopsis thaliana (Mouse-ear cress)).